We begin with the raw amino-acid sequence, 439 residues long: NAD kinase (439 aa).

Phosphoserine occurs at positions 46, 48, 50, 55, and 64.

This sequence belongs to the NAD kinase family. A divalent metal cation is required as a cofactor.

The enzyme catalyses NAD(+) + ATP = ADP + NADP(+) + H(+). The polypeptide is NAD kinase (Nadk) (Mus musculus (Mouse)).